Consider the following 141-residue polypeptide: Phosphoribosyl-AMP cyclohydrolase (141 aa).

D88 is a Mg(2+) binding site. Zn(2+) is bound at residue C89. The Mg(2+) site is built by D90 and D92. Zn(2+) is bound by residues C109 and C116.

The protein belongs to the PRA-CH family. Homodimer. It depends on Mg(2+) as a cofactor. Zn(2+) is required as a cofactor.

The protein resides in the cytoplasm. The catalysed reaction is 1-(5-phospho-beta-D-ribosyl)-5'-AMP + H2O = 1-(5-phospho-beta-D-ribosyl)-5-[(5-phospho-beta-D-ribosylamino)methylideneamino]imidazole-4-carboxamide. It participates in amino-acid biosynthesis; L-histidine biosynthesis; L-histidine from 5-phospho-alpha-D-ribose 1-diphosphate: step 3/9. Functionally, catalyzes the hydrolysis of the adenine ring of phosphoribosyl-AMP. The polypeptide is Phosphoribosyl-AMP cyclohydrolase (Paracidovorax citrulli (strain AAC00-1) (Acidovorax citrulli)).